Reading from the N-terminus, the 143-residue chain is uncharacterized protein (143 aa).

The HTH marR-type domain occupies 5-137 (DARLASDLSL…LRSAADLMLA (133 aa)). A DNA-binding region (H-T-H motif) is located at residues 51–74 (PGALAIRERVRPPSMTRVIASLAD).

In terms of assembly, homodimer.

This is an uncharacterized protein from Mycobacterium bovis (strain ATCC BAA-935 / AF2122/97).